Here is a 67-residue protein sequence, read N- to C-terminus: DNA-directed RNA polymerase subunit omega (67 aa).

The protein belongs to the RNA polymerase subunit omega family. In terms of assembly, the RNAP catalytic core consists of 2 alpha, 1 beta, 1 beta' and 1 omega subunit. When a sigma factor is associated with the core the holoenzyme is formed, which can initiate transcription.

The enzyme catalyses RNA(n) + a ribonucleoside 5'-triphosphate = RNA(n+1) + diphosphate. Promotes RNA polymerase assembly. Latches the N- and C-terminal regions of the beta' subunit thereby facilitating its interaction with the beta and alpha subunits. This Bordetella petrii (strain ATCC BAA-461 / DSM 12804 / CCUG 43448) protein is DNA-directed RNA polymerase subunit omega.